A 417-amino-acid chain; its full sequence is GTP-binding protein YPT11 (417 aa).

Positions 1–34 (MSQRKRYSLNVVTSPSIPSPTPSAPIRTNESNWE) are disordered. GTP contacts are provided by residues 97–104 (GDANVGKT), 228–232 (DTAGQ), and 292–295 (NKID). 2 S-geranylgeranyl cysteine lipidation sites follow: cysteine 415 and cysteine 416.

Belongs to the small GTPase superfamily. Rab family. In terms of assembly, interacts with MYO2 (via C-terminal tail domain). Interacts with YIF1, YIP3, YIP4 and YIP5.

Its subcellular location is the endoplasmic reticulum membrane. The protein resides in the bud tip. It is found in the bud neck. Its function is as follows. Involved in the positive control of both endoplasmic reticulum (ER) and mitochondrion inheritance during cell divison. Required for the MYO2-dependent retention of newly inherited mitochondria at the bud tip in developing daughter cells. This Saccharomyces cerevisiae (strain AWRI1631) (Baker's yeast) protein is GTP-binding protein YPT11 (YPT11).